The following is a 174-amino-acid chain: MGIEEKAGNLGIVTTTLETVVNWGRTNAMWPLLFGLACCAIEMMGAQASNYDLSRFGMELNRASPRQADLMIVAGRVSRKMAPVVRRLYDQMPEPKWVIAMGDCAACGGIFNNYAIVQGVDEVVPVDVYVAGCPPRPEALIDGIMMLHQKVMREKLSGKKEAPIRIDQPLVQVK.

[4Fe-4S] cluster-binding residues include cysteine 38, cysteine 39, cysteine 104, and cysteine 133.

Belongs to the complex I 20 kDa subunit family. In terms of assembly, NDH-1 is composed of 14 different subunits. Subunits NuoB, C, D, E, F, and G constitute the peripheral sector of the complex. The cofactor is [4Fe-4S] cluster.

Its subcellular location is the cell membrane. The enzyme catalyses a quinone + NADH + 5 H(+)(in) = a quinol + NAD(+) + 4 H(+)(out). NDH-1 shuttles electrons from NADH, via FMN and iron-sulfur (Fe-S) centers, to quinones in the respiratory chain. The immediate electron acceptor for the enzyme in this species is believed to be ubiquinone. Couples the redox reaction to proton translocation (for every two electrons transferred, four hydrogen ions are translocated across the cytoplasmic membrane), and thus conserves the redox energy in a proton gradient. In Chloroflexus aggregans (strain MD-66 / DSM 9485), this protein is NADH-quinone oxidoreductase subunit B 1.